Here is a 290-residue protein sequence, read N- to C-terminus: 33 kDa chaperonin (290 aa).

Disulfide bonds link Cys231-Cys233 and Cys263-Cys266.

It belongs to the HSP33 family. In terms of processing, under oxidizing conditions two disulfide bonds are formed involving the reactive cysteines. Under reducing conditions zinc is bound to the reactive cysteines and the protein is inactive.

It is found in the cytoplasm. Its function is as follows. Redox regulated molecular chaperone. Protects both thermally unfolding and oxidatively damaged proteins from irreversible aggregation. Plays an important role in the bacterial defense system toward oxidative stress. This Thermotoga maritima (strain ATCC 43589 / DSM 3109 / JCM 10099 / NBRC 100826 / MSB8) protein is 33 kDa chaperonin.